The following is an 82-amino-acid chain: Cell division topological specificity factor (82 aa).

This sequence belongs to the MinE family.

In terms of biological role, prevents the cell division inhibition by proteins MinC and MinD at internal division sites while permitting inhibition at polar sites. This ensures cell division at the proper site by restricting the formation of a division septum at the midpoint of the long axis of the cell. The protein is Cell division topological specificity factor of Buchnera aphidicola subsp. Cinara cedri (strain Cc).